Reading from the N-terminus, the 865-residue chain is Serine/threonine-protein kinase greatwall (865 aa).

Methionine 1 carries the post-translational modification N-acetylmethionine. In terms of domain architecture, Protein kinase spans phenylalanine 34–phenylalanine 821. Residues isoleucine 40–valine 48 and lysine 61 contribute to the ATP site. The Proton acceptor role is filled by aspartate 155. 2 positions are modified to phosphothreonine: threonine 206 and threonine 221. 2 positions are modified to phosphoserine: serine 362 and serine 442. Threonine 508 is modified (phosphothreonine). A phosphoserine mark is found at serine 545, serine 619, serine 644, and serine 655. At threonine 708 the chain carries Phosphothreonine. A Phosphoserine modification is found at serine 711. At threonine 727 the chain carries Phosphothreonine; by CDK1. An AGC-kinase C-terminal domain is found at serine 822–leucine 865. Phosphoserine is present on residues serine 861 and serine 864.

It belongs to the protein kinase superfamily. AGC Ser/Thr protein kinase family. Phosphorylation at Thr-727 by CDK1 during M phase activates its kinase activity. Maximum phosphorylation occurs in prometaphase.

The protein localises to the cytoplasm. It localises to the cytoskeleton. The protein resides in the microtubule organizing center. Its subcellular location is the centrosome. It is found in the nucleus. It carries out the reaction L-seryl-[protein] + ATP = O-phospho-L-seryl-[protein] + ADP + H(+). The catalysed reaction is L-threonyl-[protein] + ATP = O-phospho-L-threonyl-[protein] + ADP + H(+). Serine/threonine kinase that plays a key role in M phase by acting as a regulator of mitosis entry and maintenance. Acts by promoting the inactivation of protein phosphatase 2A (PP2A) during M phase: does not directly inhibit PP2A but acts by mediating phosphorylation and subsequent activation of ARPP19 and ENSA at 'Ser-62' and 'Ser-67', respectively. ARPP19 and ENSA are phosphatase inhibitors that specifically inhibit the PPP2R2D (PR55-delta) subunit of PP2A. Inactivation of PP2A during M phase is essential to keep cyclin-B1-CDK1 activity high. Following DNA damage, it is also involved in checkpoint recovery by being inhibited. The sequence is that of Serine/threonine-protein kinase greatwall (Mastl) from Mus musculus (Mouse).